The chain runs to 296 residues: Probable AP endonuclease (296 aa).

The cysteines at positions 16 and 20 are disulfide-linked. Zn(2+)-binding residues include His78, His115, Glu142, His182, His218, Asp231, His233, and Glu271.

It belongs to the AP endonuclease 2 family. It depends on Zn(2+) as a cofactor.

It is found in the host nucleus. The protein resides in the host cytoplasm. The protein localises to the virion. Its function is as follows. Endonuclease of the viral base excision repair system that catalyzes DNA cleavage reaction at the apurinic or apyrimidinic sites (AP sites). Cleaves phosphodiester bonds on the 5' side of AP sites. In addition to endonuclease activity, the AP endonuclease has a proofreading 3'-5' exonuclease activity that is considerably more efficient in the elimination of a mismatch than in that of a correctly paired base. Displays 3'-phosphatase and 3'-repair diesterase activities. The single nucleotide gaps generated by the AP endonuclease are filled by the viral repair DNA polymerase X and the DNA ligase. The chain is Probable AP endonuclease from Ornithodoros (relapsing fever ticks).